The sequence spans 2273 residues: Retinal-specific phospholipid-transporting ATPase ABCA4 (2273 aa).

The Cytoplasmic segment spans residues 1-21 (MGFVRQIQLLLWKNWTLRKRQ). Residues 22–42 (KIRFVVELVWPLSLFLVLIWL) form a helical membrane-spanning segment. Over 43–646 (RNANPLYSHH…MPYPCFVDDS (604 aa)) the chain is Extracellular. 2 cysteine pairs are disulfide-bonded: C54-C81 and C75-C324. A glycan (N-linked (GlcNAc...) asparagine) is linked at N98. The Mg(2+) site is built by S336 and N338. The cysteines at positions 370 and 519 are disulfide-linked. 3 N-linked (GlcNAc...) asparagine glycosylation sites follow: N415, N444, and N504. An N-all-trans-retinylidenephosphatidylethanolamine contacts are provided by R587 and R653. 3 cysteine pairs are disulfide-bonded: C641–C1490, C1444–C1455, and C1488–C1502. Residues 647 to 667 (FMIILNRCFPIFMVLAWIYSV) traverse the membrane as a helical segment. The Cytoplasmic portion of the chain corresponds to 668 to 699 (SMTVKSIVLEKELRLKETLKNQGVSNAVIWCT). A helical membrane pass occupies residues 700 to 720 (WFLDSFSIMSMSIFLLTIFIM). The Extracellular portion of the chain corresponds to 721–730 (HGRILHYSDP). The chain crosses the membrane as a helical span at residues 731–751 (FILFLFLLAFSTATIMLCFLL). At 752–759 (STFFSKAS) the chain is on the cytoplasmic side. The helical transmembrane segment at 760 to 780 (LAAACSGVIYFTLYLPHILCF) threads the bilayer. At 781 to 835 (AWQDRMTAELKKAVSLLSPVAFGFGTEYLVRFEEQGLGLQWSNIGNSPTEGDEFS) the chain is on the extracellular side. A helical transmembrane segment spans residues 836–856 (FLLSMQMMLLDAAVYGLLAWY). The Cytoplasmic segment spans residues 857–1376 (LDQVFPGDYG…IRSHKDFLAQ (520 aa)). The tract at residues 891-911 (ERALEKTEPLTEETEDPEHPE) is disordered. T901 carries the post-translational modification Phosphothreonine. An ABC transporter 1 domain is found at 929-1160 (VCVKNLVKIF…FGTGLYLTLV (232 aa)). ATP-binding residues include F938, G966, and K969. T970 serves as a coordination point for Mg(2+). ATP-binding residues include T971, Q1010, K1054, G1064, G1065, and H1118. S1185 bears the Phosphoserine mark. Positions 1284–1345 (PLFAGGAQQK…EPECPGPQLN (62 aa)) are disordered. T1313 bears the Phosphothreonine mark. The residue at position 1317 (S1317) is a Phosphoserine. Over residues 1331-1340 (GQPPPEPECP) the composition is skewed to pro residues. Residues 1377 to 1397 (IVLPATFVFLALMLSIVIPPF) form a helical membrane-spanning segment. Topologically, residues 1398–1727 (GEYPALTLHP…VSPTTYWVTN (330 aa)) are extracellular. N-linked (GlcNAc...) asparagine glycosylation occurs at N1469. N1529, N1588, and N1662 each carry an N-linked (GlcNAc...) asparagine glycan. Residues 1728-1748 (FLWDIMNYSVSAGLVVGIFIG) form a helical membrane-spanning segment. Topologically, residues 1749–1759 (FQKKAYTSPEN) are cytoplasmic. A helical transmembrane segment spans residues 1760–1780 (LPALVALLLLYGWAVIPMMYP). Topologically, residues 1781-1792 (ASFLFDVPSTAY) are extracellular. Residues 1793-1813 (VALSCANLFIGINSSAITFIL) traverse the membrane as a helical segment. Residues 1814-1831 (ELFENNRTLLRFNAVLRK) are Cytoplasmic-facing. The helical transmembrane segment at 1832-1852 (LLIVFPHFCLGRGLIDLALSQ) threads the bilayer. The Extracellular portion of the chain corresponds to 1853 to 1873 (AVTDVYARFGEEHSANPFHWD). The chain crosses the membrane as a helical span at residues 1874–1894 (LIGKNLFAMVVEGVVYFLLTL). Residues 1895–2273 (LVQRHFFLSQ…AAGASRQAQD (379 aa)) are Cytoplasmic-facing. Positions 1938 to 2170 (LRLHELTKIY…FGDGYIVTMK (233 aa)) constitute an ABC transporter 2 domain. Positions 1974, 1975, 1978, 1979, 1980, and 2073 each coordinate ATP. T1979 contributes to the Mg(2+) binding site. The tract at residues 2244 to 2249 (VFVNFA) is essential for ATP binding and ATPase activity.

Belongs to the ABC transporter superfamily. ABCA family. In terms of processing, proteolytic cleavage by trypsin leads to a 120-kDa N-terminal fragment and a 115-kDa C-terminal fragment that are linked through disulfide bonds. Post-translationally, N-glycosylated. Phosphorylation is independent of light exposure and modulates ATPase activity. Retinal-specific. Seems to be exclusively found in the rims of rod photoreceptor cells.

Its subcellular location is the membrane. It localises to the endoplasmic reticulum. It is found in the cytoplasmic vesicle. The protein resides in the cell projection. The protein localises to the cilium. Its subcellular location is the photoreceptor outer segment. The enzyme catalyses an N-all-trans-retinylidenephosphatidylethanolamine(out) + ATP + H2O = an N-all-trans-retinylidenephosphatidylethanolamine(in) + ADP + phosphate + H(+). It carries out the reaction ATP + H2O + phospholipidSide 1 = ADP + phosphate + phospholipidSide 2.. It catalyses the reaction a 1,2-diacyl-sn-glycero-3-phosphoethanolamine(out) + ATP + H2O = a 1,2-diacyl-sn-glycero-3-phosphoethanolamine(in) + ADP + phosphate + H(+). The catalysed reaction is N-11-cis-retinylidenephosphatidylethanolamine(out) + ATP + H2O = N-11-cis-retinylidenephosphatidylethanolamine(in) + ADP + phosphate + H(+). The enzyme catalyses ATP + H2O = ADP + phosphate + H(+). With respect to regulation, ATPase activity is decreased by cholesterol and ceramide. Phospholipids translocase activity is highly reduced by berylium fluoride and aluminum floride. N-ethylmaleimide inhibits phospholipid translocase activity. In terms of biological role, flippase that catalyzes in an ATP-dependent manner the transport of retinal-phosphatidylethanolamine conjugates like 11-cis and all-trans isomers of N-retinylidene-phosphatidylethanolamine (N-Ret-PE) from the lumen to the cytoplasmic leaflet of photoreceptor outer segment disk membranes, where 11-cis-retinylidene-phosphatidylethanolamine is then isomerized to its all-trans isomer and reduced by RDH8 to produce all-trans-retinol. This transport activity ensures that all-trans-retinal generated from photoexcitation and 11-cis-retinal not needed for the regeneration of rhodopsin and cone opsins are effectively cleared from the photoreceptors, therefore preventing their accumulation and the formation of toxic bisretinoid. Displays ATPase activity in vitro in absence of retinal substrate. May display GTPase activity that is strongly influenced by the lipid environment and the presence of retinoid compounds. Binds the unprotonated form of N-retinylidene-phosphatidylethanolamine with high affinity in the absence of ATP, and ATP binding and hydrolysis induce a protein conformational change that causes N-retinylidene-phosphatidylethanolamine release. This Homo sapiens (Human) protein is Retinal-specific phospholipid-transporting ATPase ABCA4.